A 436-amino-acid chain; its full sequence is 3-ketoacyl-CoA thiolase (436 aa).

Cysteine 99 functions as the Acyl-thioester intermediate in the catalytic mechanism. Active-site proton acceptor residues include histidine 392 and cysteine 422.

This sequence belongs to the thiolase-like superfamily. Thiolase family. As to quaternary structure, heterotetramer of two alpha chains (FadJ) and two beta chains (FadI).

Its subcellular location is the cytoplasm. The enzyme catalyses an acyl-CoA + acetyl-CoA = a 3-oxoacyl-CoA + CoA. It participates in lipid metabolism; fatty acid beta-oxidation. Functionally, catalyzes the final step of fatty acid oxidation in which acetyl-CoA is released and the CoA ester of a fatty acid two carbons shorter is formed. This Escherichia coli O157:H7 protein is 3-ketoacyl-CoA thiolase.